A 105-amino-acid chain; its full sequence is uncharacterized protein (105 aa).

A helical membrane pass occupies residues 8 to 28; it reads FMTAGIIIALIIAVLAPFLAS. The tract at residues 32 to 53 is disordered; it reads DGLESTAEKVMPNPETEPVLES. Residues 72 to 92 traverse the membrane as a helical segment; it reads VSMVIGTILVLAIAYGVGAVF.

To M.jannaschii MJ1570.

Its subcellular location is the cell membrane. This is an uncharacterized protein from Methanothermobacter thermautotrophicus (strain ATCC 29096 / DSM 1053 / JCM 10044 / NBRC 100330 / Delta H) (Methanobacterium thermoautotrophicum).